Reading from the N-terminus, the 1011-residue chain is CRM-domain containing factor CFM2, chloroplastic (1011 aa).

Residues methionine 1–phenylalanine 45 constitute a chloroplast transit peptide. Residues histidine 77 to glycine 90 are compositionally biased toward basic and acidic residues. A disordered region spans residues histidine 77–glutamate 96. CRM domains follow at residues leucine 164–serine 260, proline 376–serine 473, and glutamate 577–arginine 677. 2 disordered regions span residues aspartate 721–leucine 810 and leucine 841–valine 872. Residues serine 722–methionine 736 are compositionally biased toward polar residues. Over residues glutamate 743–glutamate 757 the composition is skewed to basic and acidic residues. Residues serine 762–glutamate 771 show a composition bias toward polar residues. The span at glutamate 772–valine 782 shows a compositional bias: acidic residues. Positions glycine 849–serine 859 are enriched in polar residues. The CRM 4 domain occupies threonine 873–phenylalanine 972.

In terms of assembly, interacts with RNA. Part of large ribonucleo-protein particles that contain CAF1 and/or CAF2.

It is found in the plastid. The protein localises to the chloroplast stroma. Its function is as follows. Binds specific group II introns in chloroplasts and facilitates their splicing. Acts on both subgroup IIA and subgroup IIB introns. The substrates of the subgroup IIB also require the CRM domain proteins CAF1 or CAF2, with a simultaneous binding of CFM2 and CAF1 or CAF2. Can bind to and promote the splicing of the single group I intron in chloroplast tRNA transcript of trnL-UAA gene. The polypeptide is CRM-domain containing factor CFM2, chloroplastic (Arabidopsis thaliana (Mouse-ear cress)).